Consider the following 1427-residue polypeptide: A disintegrin and metalloproteinase with thrombospondin motifs 13 (1427 aa).

The N-terminal stretch at Met1–Gly29 is a signal peptide. Residues Pro30 to Arg74 constitute a propeptide that is removed on maturation. The tract at residues Ser51–Gln70 is disordered. The region spanning Leu80–Pro286 is the Peptidase M12B domain. Residue Glu83 coordinates Ca(2+). Asn142 and Asn146 each carry an N-linked (GlcNAc...) asparagine glycan. 3 disulfide bridges follow: Cys155–Cys208, Cys202–Cys281, and Cys242–Cys265. The Ca(2+) site is built by Asp173, Asp182, Glu184, Asp187, and Glu212. His224 provides a ligand contact to Zn(2+). The active site involves Glu225. Zn(2+) is bound by residues His228 and His234. 2 residues coordinate Ca(2+): Cys281 and Asp284. The Disintegrin domain occupies Arg287–Val383. 4 disulfide bridges follow: Cys311–Cys337, Cys322–Cys347, Cys332–Cys366, and Cys360–Cys371. In terms of domain architecture, TSP type-1 1 spans His384 to Glu439. The C-linked (Man) tryptophan glycan is linked to Trp387. Cystine bridges form between Cys396/Cys433, Cys400/Cys438, Cys411/Cys423, Cys450/Cys487, Cys483/Cys522, Cys508/Cys527, Cys532/Cys548, and Cys545/Cys555. The O-linked (Fuc...) serine glycan is linked to Ser399. Residues Lys440–Ser556 form a cysteine-rich region. The Cell attachment site motif lies at Arg498 to Asp500. 3 N-linked (GlcNAc...) asparagine glycosylation sites follow: Asn552, Asn579, and Asn614. Residues Ser556–Ala685 are spacer. Asn667 carries N-linked (GlcNAc...) (complex) asparagine glycosylation. 7 consecutive TSP type-1 domains span residues Pro682–Pro730, Cys742–Pro805, Trp808–Cys859, Val896–Pro950, Cys951–Pro1011, Cys1012–Leu1068, and Cys1072–Val1131. O-linked (Fuc...) serine glycosylation occurs at Ser698. An N-linked (GlcNAc...) (complex) asparagine glycan is attached at Asn707. O-linked (Fuc...) serine glycosylation is present at Ser757. Asn828 carries N-linked (GlcNAc...) asparagine glycosylation. Residues Ser907, Ser965, Ser1027, and Ser1087 are each glycosylated (O-linked (Fuc...) serine). CUB domains are found at residues Cys1192–Glu1298 and Cys1299–Thr1427. N-linked (GlcNAc...) asparagine glycans are attached at residues Asn1235 and Asn1354.

Zn(2+) serves as cofactor. It depends on Ca(2+) as a cofactor. In terms of processing, glycosylated. O-fucosylated by POFUT2 on a serine or a threonine residue found within the consensus sequence C1-X(2)-(S/T)-C2-G of the TSP type-1 repeat domains where C1 and C2 are the first and second cysteine residue of the repeat, respectively. Fucosylated repeats can then be further glycosylated by the addition of a beta-1,3-glucose residue by the glucosyltransferase, B3GALTL. Fucosylation mediates the efficient secretion of ADAMTS13. May also be C-glycosylated on tryptophan residues within the consensus sequence W-X-X-W of the TPRs, and also N-glycosylated. These other glycosylations can also facilitate secretion. The precursor is processed by a furin endopeptidase which cleaves off the pro-domain. Plasma. Expressed primarily in liver.

It localises to the secreted. It catalyses the reaction The enzyme cleaves the von Willebrand factor at bond 842-Tyr-|-Met-843 within the A2 domain.. Zinc and calcium ions cooperatively modulate enzyme activity. The cleavage of the pro-domain is not required for protease activity. Dependence on calcium for proteolytic activity is mediated by the high affinity site. Its function is as follows. Cleaves the vWF multimers in plasma into smaller forms thereby controlling vWF-mediated platelet thrombus formation. This Homo sapiens (Human) protein is A disintegrin and metalloproteinase with thrombospondin motifs 13 (ADAMTS13).